The sequence spans 436 residues: Capsid protein (436 aa).

The interval 326-370 (RDYSQRGTVPTAPSRQQVESEARAPYPKTNRPPTTADILPGDLDS) is disordered. The segment covering 330–344 (QRGTVPTAPSRQQVE) has biased composition (polar residues).

The protein belongs to the anelloviridae capsid protein family.

It is found in the virion. Its function is as follows. Self-assembles to form an icosahedral capsid with a T=1 symmetry, about 30 nm in diameter, and consisting of 60 capsid proteins. The capsid encapsulates the genomic DNA. Capsid protein is involved in attachment and entry into the host cell. The protein is Capsid protein of Torque teno felis virus (isolate Fc-TTV4).